Consider the following 188-residue polypeptide: Elongation factor P (188 aa).

Lys34 carries the post-translational modification N6-(3,6-diaminohexanoyl)-5-hydroxylysine.

This sequence belongs to the elongation factor P family. May be beta-lysylated on the epsilon-amino group of Lys-34 by the combined action of EpmA and EpmB, and then hydroxylated on the C5 position of the same residue by EpmC (if this protein is present). Lysylation is critical for the stimulatory effect of EF-P on peptide-bond formation. The lysylation moiety may extend toward the peptidyltransferase center and stabilize the terminal 3-CCA end of the tRNA. Hydroxylation of the C5 position on Lys-34 may allow additional potential stabilizing hydrogen-bond interactions with the P-tRNA.

The protein localises to the cytoplasm. Its pathway is protein biosynthesis; polypeptide chain elongation. Its function is as follows. Involved in peptide bond synthesis. Alleviates ribosome stalling that occurs when 3 or more consecutive Pro residues or the sequence PPG is present in a protein, possibly by augmenting the peptidyl transferase activity of the ribosome. Modification of Lys-34 is required for alleviation. This is Elongation factor P from Stenotrophomonas maltophilia (strain K279a).